The sequence spans 192 residues: Epididymal-specific lipocalin-12 (192 aa).

The signal sequence occupies residues 1–19; that stretch reads MRLLCGLWLWLSLLKVLQA. A disulfide bridge links cysteine 88 with cysteine 192.

It belongs to the calycin superfamily. Lipocalin family. Monomer.

The protein resides in the secreted. In terms of biological role, binds all-trans retinoic acid and may act as a retinoid carrier protein within the epididymis. May play a role in male fertility. This is Epididymal-specific lipocalin-12 (LCN12) from Homo sapiens (Human).